The following is a 166-amino-acid chain: Early E3 18.5 kDa glycoprotein (166 aa).

The N-terminal stretch at 1-19 (MGPILVLLVLLSLLEPGSA) is a signal peptide. Residues 20–131 (NYDPCLDFDP…SKDNIVTFSI (112 aa)) are Lumenal-facing. The N-linked (GlcNAc...) asparagine; by host glycan is linked to N31. 2 disulfides stabilise this stretch: C32/C50 and C44/C106. N-linked (GlcNAc...) asparagine; by host glycosylation is found at N63, N67, and N97. Residues 132 to 152 (AYCLCACLLTALLCVCIHLLV) traverse the membrane as a helical segment. Over 153 to 166 (TTRIKNANNKEKMP) the chain is Cytoplasmic. A Di-lysine motif motif is present at residues 162-166 (KEKMP).

The protein belongs to the adenoviridae E19 family. Both disulfide bonds are absolutely critical for the interaction with MHC antigens. In terms of processing, N-glycosylated; high-mannose.

Its subcellular location is the host endoplasmic reticulum membrane. Binds and retains class I heavy chains in the endoplasmic reticulum during the early period of virus infection, thereby impairing their transport to the cell surface. Also delays the expression of class I alleles that it cannot affect by direct retention. Binds transporters associated with antigen processing (TAP) and acts as a tapasin inhibitor, preventing class I/TAP association. In consequence, infected cells are masked for immune recognition by cytotoxic T-lymphocytes. This chain is Early E3 18.5 kDa glycoprotein, found in Human adenovirus B serotype 11 (strain Slobiski) (HAdV-11).